The chain runs to 182 residues: Adenylate kinase (182 aa).

12-17 lines the ATP pocket; it reads GAGKGT. Residues 32–61 are NMP; the sequence is STGELLRKEIEMNTALGIQVKDIMNRGELV. Residues threonine 33, arginine 38, 59–61, 85–88, and glutamine 92 contribute to the AMP site; these read ELV and GYPR. Residues 126 to 132 are LID; it reads LRGRKDD. ATP is bound at residue arginine 127. The AMP site is built by arginine 129 and arginine 140. Arginine 168 is an ATP binding site.

Belongs to the adenylate kinase family. As to quaternary structure, monomer.

Its subcellular location is the cytoplasm. It catalyses the reaction AMP + ATP = 2 ADP. It functions in the pathway purine metabolism; AMP biosynthesis via salvage pathway; AMP from ADP: step 1/1. Catalyzes the reversible transfer of the terminal phosphate group between ATP and AMP. Plays an important role in cellular energy homeostasis and in adenine nucleotide metabolism. The chain is Adenylate kinase from Prochlorococcus marinus (strain MIT 9301).